We begin with the raw amino-acid sequence, 509 residues long: Putative cytochrome P450 CYP13A8 (509 aa).

Cysteine 455 is a heme binding site.

The protein belongs to the cytochrome P450 family. Heme is required as a cofactor.

Cytochromes P450 are a group of heme-thiolate monooxygenases. They oxidize a variety of structurally unrelated compounds, including steroids, fatty acids, and xenobiotics. The polypeptide is Putative cytochrome P450 CYP13A8 (cyp-13A8) (Caenorhabditis elegans).